Reading from the N-terminus, the 637-residue chain is ATP-dependent rRNA helicase SPB4 (637 aa).

The short motif at 10–38 (WENLRVDLEPWLKDAIRSLNYPTMTPVQA) is the Q motif element. In terms of domain architecture, Helicase ATP-binding spans 41–236 (IPLLSGNKDV…RTGMNNPVKL (196 aa)). ATP is bound at residue 54–61 (AVTGSGKT). Positions 184-187 (DEAD) match the DEAD box motif. Residues 266 to 444 (KLTTMLQMLR…KFQKKLRKYM (179 aa)) enclose the Helicase C-terminal domain. Positions 528–597 (SAEKARLENL…QLEAEQERGG (70 aa)) form a coiled coil. Positions 554 to 637 (LKVKNEAWSS…GVLQGSFDDL (84 aa)) are disordered. Basic and acidic residues-rich tracts occupy residues 564-576 (KTEK…ERKE) and 583-598 (EAIE…RGGL). The segment covering 621-630 (NGGGGGGGVL) has biased composition (gly residues).

It belongs to the DEAD box helicase family. DDX55/SPB4 subfamily. Component of pre-60S ribosomal complexes.

Its subcellular location is the nucleus. The protein localises to the nucleolus. It carries out the reaction ATP + H2O = ADP + phosphate + H(+). In terms of biological role, ATP-binding RNA helicase involved in the biogenesis of 60S ribosomal subunits. Binds 90S pre-ribosomal particles and dissociates from pre-60S ribosomal particles after processing of 27SB pre-rRNA. Required for the normal formation of 18S rRNA through the processing of pre-rRNAs at sites A0, A1 and A2, and the normal formation of 25S and 5.8S rRNAs through the processing of pre-rRNAs at sites C1 and C2. This chain is ATP-dependent rRNA helicase SPB4, found in Lodderomyces elongisporus (strain ATCC 11503 / CBS 2605 / JCM 1781 / NBRC 1676 / NRRL YB-4239) (Yeast).